A 155-amino-acid chain; its full sequence is RxLR effector protein 24 (155 aa).

A signal peptide spans 1–21 (MRLLIWVLFVTLVTFVSNTTA). The RxLR-dEER signature appears at 52 to 78 (RFLRTESKNDLKSDADTNGIDIEDEER). Positions 105–155 (EKAFQRMNQKGETPTTLAKRLDIGKTAEKRFEKTYEKYTAWWINHHTNAGT) are RABA-binding domain.

Belongs to the RxLR effector family. Interacts with Arabidopsis thaliana RABA GTPases including RABA1a, RABA1b, RABA1c, RABA1d, RABA1f, RABA2a, RABA2c, RABA2d, RABA4a, RABA4b and RABA4c.

It localises to the secreted. Its subcellular location is the host cell membrane. The protein localises to the host endomembrane system. Its function is as follows. Effector protein that contributes to pathogen virulence. Targets members of the RABA GTPases subfamily to inhibit vesicular secretion, leading to an accumulation of secretory proteins in the endoplasmic reticulum. The protein is RxLR effector protein 24 of Phytophthora brassicae.